The primary structure comprises 238 residues: MKIIAGLGNPGAQYAGNRHNIGFMAVDALQRLPSFAPWSKKFKAEISEGEIGGEKVLLMKPLTYMNLSGESVGEAMRFFKLTPADIIAIHDELDLLAGRTRIKIGGGHGGHNGLKSLDAHCGKEYRRLRLGIGHPGDKERVHGHVLGDFAKSDRVWLDPLLDAIADNAAMLVKGDDSQLMNKLALATGSKPEAEKPVKVAKPAAQSHIHQARNSAQPKKLPETGPMAEMLKRMFGKKD.

A tRNA-binding site is contributed by Tyr14. The active-site Proton acceptor is the His19. TRNA is bound by residues Tyr64, Asn66, and Asn112. Positions 202-225 (PAAQSHIHQARNSAQPKKLPETGP) are disordered. Positions 207 to 216 (HIHQARNSAQ) are enriched in polar residues.

This sequence belongs to the PTH family. As to quaternary structure, monomer.

It is found in the cytoplasm. It carries out the reaction an N-acyl-L-alpha-aminoacyl-tRNA + H2O = an N-acyl-L-amino acid + a tRNA + H(+). Hydrolyzes ribosome-free peptidyl-tRNAs (with 1 or more amino acids incorporated), which drop off the ribosome during protein synthesis, or as a result of ribosome stalling. In terms of biological role, catalyzes the release of premature peptidyl moieties from peptidyl-tRNA molecules trapped in stalled 50S ribosomal subunits, and thus maintains levels of free tRNAs and 50S ribosomes. The sequence is that of Peptidyl-tRNA hydrolase from Agrobacterium fabrum (strain C58 / ATCC 33970) (Agrobacterium tumefaciens (strain C58)).